The sequence spans 753 residues: Polyadenylate-binding protein, cytoplasmic and nuclear (753 aa).

Over residues 1–26 (MSAEVSTTPAADNTVNGTPEATNAAA) the composition is skewed to polar residues. The disordered stretch occupies residues 1–52 (MSAEVSTTPAADNTVNGTPEATNAAATSAPEVTAVESASPSTTPSASQPHSA). A compositionally biased stretch (low complexity) spans 37 to 52 (SASPSTTPSASQPHSA). 4 consecutive RRM domains span residues 52–130 (ASLY…WSQR), 140–217 (GNVF…HHIS), 233–310 (TNVY…RAQK), and 336–460 (VNLY…LAQR). Disordered regions lie at residues 367 to 417 (VMRD…TEKK) and 602 to 645 (MGQG…REEV). Basic and acidic residues predominate over residues 379-417 (ESEKEKEKESNKENEKEGEEKTEEKPKESEEEPKKTEKK). A compositionally biased stretch (gly residues) spans 605 to 631 (GIRGPGYGQGRGGAPVQGGPRPQGGRG). A PABC domain is found at 648 to 725 (TGGLTAQTLS…ALSVYDEYMK (78 aa)). The disordered stretch occupies residues 728-753 (GEGEAPAESAKPKEDAAETATEENKS). Residues 737-753 (AKPKEDAAETATEENKS) are compositionally biased toward basic and acidic residues.

The protein belongs to the polyadenylate-binding protein type-1 family.

The protein resides in the cytoplasm. It localises to the nucleus. Its function is as follows. Binds the poly(A) tail of mRNA. Appears to be an important mediator of the multiple roles of the poly(A) tail in mRNA biogenesis, stability and translation. In the nucleus, involved in both mRNA cleavage and polyadenylation. Is also required for efficient mRNA export to the cytoplasm. Acts in concert with a poly(A)-specific nuclease (PAN) to affect poly(A) tail shortening, which may occur concomitantly with either nucleocytoplasmic mRNA transport or translational initiation. In the cytoplasm, stimulates translation initiation and regulates mRNA decay through translation termination-coupled poly(A) shortening, probably mediated by PAN. This Aspergillus fumigatus (strain ATCC MYA-4609 / CBS 101355 / FGSC A1100 / Af293) (Neosartorya fumigata) protein is Polyadenylate-binding protein, cytoplasmic and nuclear (pab1).